The following is a 674-amino-acid chain: tRNA 5-methylaminomethyl-2-thiouridine biosynthesis bifunctional protein MnmC (674 aa).

The tRNA (mnm(5)s(2)U34)-methyltransferase stretch occupies residues 1–248 (MAASSLPSHN…KREMCFGRYA (248 aa)). Positions 276 to 674 (IGAGLAGATV…AIRHWRSGKR (399 aa)) are FAD-dependent cmnm(5)s(2)U34 oxidoreductase.

In the N-terminal section; belongs to the methyltransferase superfamily. tRNA (mnm(5)s(2)U34)-methyltransferase family. This sequence in the C-terminal section; belongs to the DAO family. The cofactor is FAD.

It is found in the cytoplasm. The catalysed reaction is 5-aminomethyl-2-thiouridine(34) in tRNA + S-adenosyl-L-methionine = 5-methylaminomethyl-2-thiouridine(34) in tRNA + S-adenosyl-L-homocysteine + H(+). Its function is as follows. Catalyzes the last two steps in the biosynthesis of 5-methylaminomethyl-2-thiouridine (mnm(5)s(2)U) at the wobble position (U34) in tRNA. Catalyzes the FAD-dependent demodification of cmnm(5)s(2)U34 to nm(5)s(2)U34, followed by the transfer of a methyl group from S-adenosyl-L-methionine to nm(5)s(2)U34, to form mnm(5)s(2)U34. The sequence is that of tRNA 5-methylaminomethyl-2-thiouridine biosynthesis bifunctional protein MnmC from Hydrogenovibrio crunogenus (strain DSM 25203 / XCL-2) (Thiomicrospira crunogena).